Reading from the N-terminus, the 307-residue chain is Ornithine carbamoyltransferase (307 aa).

Carbamoyl phosphate is bound by residues 54-57 (STRT), Q81, R105, and 132-135 (HPCQ). L-ornithine-binding positions include N163, D221, and 225-226 (SM). Residues 261–262 (CL) and R289 contribute to the carbamoyl phosphate site.

It belongs to the aspartate/ornithine carbamoyltransferase superfamily. OTCase family.

Its subcellular location is the cytoplasm. The enzyme catalyses carbamoyl phosphate + L-ornithine = L-citrulline + phosphate + H(+). It participates in amino-acid biosynthesis; L-arginine biosynthesis; L-arginine from L-ornithine and carbamoyl phosphate: step 1/3. Functionally, reversibly catalyzes the transfer of the carbamoyl group from carbamoyl phosphate (CP) to the N(epsilon) atom of ornithine (ORN) to produce L-citrulline. The protein is Ornithine carbamoyltransferase of Aromatoleum aromaticum (strain DSM 19018 / LMG 30748 / EbN1) (Azoarcus sp. (strain EbN1)).